The sequence spans 620 residues: Probable potassium transport system protein Kup 2 (620 aa).

The next 12 helical transmembrane spans lie at 10 to 30 (LLVS…LYAL), 50 to 70 (VLSL…VIVI), 102 to 122 (MMLG…TPAI), 136 to 156 (PDLR…LFAI), 168 to 188 (FGPV…VNVI), 211 to 231 (LMSF…EALY), 246 to 266 (WFCL…ALLI), 284 to 304 (MVVP…QAVI), 336 to 356 (IYVP…VVGF), 368 to 388 (IAVT…MALL), 393 to 413 (MALV…FFSA), and 415 to 435 (IIKV…SFTV).

Belongs to the HAK/KUP transporter (TC 2.A.72) family.

The protein localises to the cell inner membrane. The enzyme catalyses K(+)(in) + H(+)(in) = K(+)(out) + H(+)(out). Transport of potassium into the cell. Likely operates as a K(+):H(+) symporter. In Rhodopseudomonas palustris (strain BisB5), this protein is Probable potassium transport system protein Kup 2.